A 332-amino-acid chain; its full sequence is Adenine deaminase (332 aa).

3 residues coordinate Zn(2+): H14, H16, and H194. E197 serves as the catalytic Proton donor. Zn(2+) is bound at residue D275. Residue D276 coordinates substrate.

This sequence belongs to the metallo-dependent hydrolases superfamily. Adenosine and AMP deaminases family. Adenine deaminase type 2 subfamily. Zn(2+) serves as cofactor.

It carries out the reaction adenine + H2O + H(+) = hypoxanthine + NH4(+). Functionally, catalyzes the hydrolytic deamination of adenine to hypoxanthine. Plays an important role in the purine salvage pathway and in nitrogen catabolism. This is Adenine deaminase from Psychrobacter cryohalolentis (strain ATCC BAA-1226 / DSM 17306 / VKM B-2378 / K5).